Reading from the N-terminus, the 142-residue chain is Dromaiocalcin-1 (142 aa).

Disulfide bonds link Cys-13-Cys-24, Cys-41-Cys-138, and Cys-113-Cys-130. The C-type lectin domain occupies 20–139 (FRGNCYGYFR…CGERNAFICK (120 aa)).

It is found in the secreted. The protein localises to the extracellular space. The protein resides in the extracellular matrix. In Dromaius novaehollandiae (Emu), this protein is Dromaiocalcin-1.